Reading from the N-terminus, the 263-residue chain is Chymotrypsinogen B (263 aa).

The first 18 residues, 1–18, serve as a signal peptide directing secretion; the sequence is MAFLWLVSCFALVGATFG. Disulfide bonds link Cys-19–Cys-140, Cys-60–Cys-76, Cys-154–Cys-219, Cys-186–Cys-200, and Cys-209–Cys-238. One can recognise a Peptidase S1 domain in the interval 34 to 261; sequence IVNGEDAIPG…LMPWVQEILE (228 aa). The active-site Charge relay system is His-75. Ser-93 is modified (phosphoserine). The Charge relay system role is filled by Asp-120. The active-site Charge relay system is Ser-213.

The protein belongs to the peptidase S1 family.

Its subcellular location is the secreted. It localises to the extracellular space. It carries out the reaction Preferential cleavage: Tyr-|-Xaa, Trp-|-Xaa, Phe-|-Xaa, Leu-|-Xaa.. This Mus musculus (Mouse) protein is Chymotrypsinogen B (Ctrb1).